The primary structure comprises 99 residues: Integration host factor subunit alpha (99 aa).

This sequence belongs to the bacterial histone-like protein family. Heterodimer of an alpha and a beta chain.

Functionally, this protein is one of the two subunits of integration host factor, a specific DNA-binding protein that functions in genetic recombination as well as in transcriptional and translational control. This chain is Integration host factor subunit alpha, found in Thioalkalivibrio sulfidiphilus (strain HL-EbGR7).